Reading from the N-terminus, the 366-residue chain is Ribosomal RNA large subunit methyltransferase M (366 aa).

S-adenosyl-L-methionine is bound by residues S188, C221–G224, D240, D260, and D277. Residue K306 is the Proton acceptor of the active site.

This sequence belongs to the class I-like SAM-binding methyltransferase superfamily. RNA methyltransferase RlmE family. RlmM subfamily. As to quaternary structure, monomer.

The protein localises to the cytoplasm. The catalysed reaction is cytidine(2498) in 23S rRNA + S-adenosyl-L-methionine = 2'-O-methylcytidine(2498) in 23S rRNA + S-adenosyl-L-homocysteine + H(+). In terms of biological role, catalyzes the 2'-O-methylation at nucleotide C2498 in 23S rRNA. This Cronobacter sakazakii (strain ATCC BAA-894) (Enterobacter sakazakii) protein is Ribosomal RNA large subunit methyltransferase M.